Consider the following 183-residue polypeptide: ATP-dependent protease subunit HslV (183 aa).

Threonine 13 is an active-site residue. Residues glycine 168, cysteine 171, and threonine 174 each contribute to the Na(+) site.

It belongs to the peptidase T1B family. HslV subfamily. In terms of assembly, a double ring-shaped homohexamer of HslV is capped on each side by a ring-shaped HslU homohexamer. The assembly of the HslU/HslV complex is dependent on binding of ATP.

It localises to the cytoplasm. The catalysed reaction is ATP-dependent cleavage of peptide bonds with broad specificity.. Allosterically activated by HslU binding. In terms of biological role, protease subunit of a proteasome-like degradation complex believed to be a general protein degrading machinery. In Xanthomonas oryzae pv. oryzae (strain MAFF 311018), this protein is ATP-dependent protease subunit HslV.